The chain runs to 567 residues: ATP-dependent RNA helicase HAS1 (567 aa).

Residues 1-109 (MAKNVNSKAN…AQNDKFEDAG (109 aa)) are disordered. A compositionally biased stretch (acidic residues) spans 30–40 (EFSDSEDDEVD). Residues 35–88 (EDDEVDQEKLVEELDEDFDEVANMLGADVTDPEEKKQSKLERKRKRDEEATAEY) adopt a coiled-coil conformation. Residues 103–131 (DKFEDAGLSEPTMRAISDMGFKTMTKVQA) carry the Q motif motif. A Helicase ATP-binding domain is found at 134 to 310 (IPPLLAGKDV…RISLRPGPLY (177 aa)). 147-154 (AKTGSGKT) serves as a coordination point for ATP. A DEAD box motif is present at residues 257–260 (DEAD). The Helicase C-terminal domain occupies 324–484 (GLEQGYVVCD…EYEFPTNKIV (161 aa)).

Belongs to the DEAD box helicase family. DDX18/HAS1 subfamily. As to quaternary structure, associates in the nucleolus with the 60S and pre-60S ribosomal subunits.

It localises to the nucleus. The protein resides in the nucleolus. The enzyme catalyses ATP + H2O = ADP + phosphate + H(+). In terms of biological role, ATP-dependent RNA helicase involved in 40S ribosomal subunit biogenesis. Required for the processing and cleavage of 35S pre-rRNA at sites A0, A1, and A2, leading to mature 18S rRNA. The sequence is that of ATP-dependent RNA helicase HAS1 (HAS1) from Scheffersomyces stipitis (strain ATCC 58785 / CBS 6054 / NBRC 10063 / NRRL Y-11545) (Yeast).